A 381-amino-acid polypeptide reads, in one-letter code: Chaperone protein DnaJ (381 aa).

In terms of domain architecture, J spans 5-69 (DYYEVLGVSK…EKRARYDRFG (65 aa)). The CR-type zinc-finger motif lies at 136 to 218 (GKETEIEVPH…CGGTGHVKKR (83 aa)). Cys149, Cys152, Cys166, Cys169, Cys192, Cys195, Cys206, and Cys209 together coordinate Zn(2+). CXXCXGXG motif repeat units lie at residues 149–156 (CDTCHGSG), 166–173 (CPHCHGSG), 192–199 (CPVCGGTG), and 206–213 (CPTCGGTG). A disordered region spans residues 154–174 (GSGAKPGTSPQSCPHCHGSGQ).

This sequence belongs to the DnaJ family. Homodimer. The cofactor is Zn(2+).

The protein resides in the cytoplasm. Functionally, participates actively in the response to hyperosmotic and heat shock by preventing the aggregation of stress-denatured proteins and by disaggregating proteins, also in an autonomous, DnaK-independent fashion. Unfolded proteins bind initially to DnaJ; upon interaction with the DnaJ-bound protein, DnaK hydrolyzes its bound ATP, resulting in the formation of a stable complex. GrpE releases ADP from DnaK; ATP binding to DnaK triggers the release of the substrate protein, thus completing the reaction cycle. Several rounds of ATP-dependent interactions between DnaJ, DnaK and GrpE are required for fully efficient folding. Also involved, together with DnaK and GrpE, in the DNA replication of plasmids through activation of initiation proteins. This Geobacillus thermodenitrificans (strain NG80-2) protein is Chaperone protein DnaJ.